We begin with the raw amino-acid sequence, 136 residues long: Glycine-rich RNA-binding protein 4, mitochondrial (136 aa).

Residues 1 to 33 constitute a mitochondrion transit peptide; the sequence is MAFCNKLSGILRQGVSQSSNGPVTSMLGSLRYM. Positions 35 to 113 constitute an RRM domain; sequence SKLFVGGLSW…RQIRVNLATE (79 aa). Ser-43 is modified (phosphoserine). Residues 113–136 are disordered; the sequence is ERSSAPRSSFGGGGGYGGGGGGGY. The span at 122–136 shows a compositional bias: gly residues; sequence FGGGGGYGGGGGGGY. Residues 123–135 form a glycine-rich (GR) required for cell-to-cell movement region; that stretch reads GGGGGYGGGGGGG.

Belongs to the GR-RBP family. In terms of assembly, binds to small phloem-mobile single-stranded RNAs (ss-sRNA, e.g. small interfering RNA (siRNA) and microRNA (miRNA)) in the phloeme exudate, including viral-derived sRNA (vsiRNA). Abundantly expressed in young plants, root tips, and flowers, but weakly in mature leaves and stems, implying highly expression in actively proliferating organs.

Its subcellular location is the mitochondrion. The protein localises to the secreted. Its function is as follows. Possibly has a role in RNA transcription or processing during stress. Binds sequence non-specifically to RNAs and DNAs. Mediates cell-to-cell trafficking of RNA interference (RNAi) signals (small RNAs (sRNA), e.g. small interfering RNA (siRNA) and microRNA (miRNA)) which regulate growth and development, as well as responses to environmental inputs, including pathogen attack; can compromise zucchini yellow mosaic virus (ZYMV) and tobacco rattle virus (TRV) infections at the early stage. This chain is Glycine-rich RNA-binding protein 4, mitochondrial, found in Arabidopsis thaliana (Mouse-ear cress).